The chain runs to 419 residues: Gamma-glutamyl phosphate reductase (419 aa).

Belongs to the gamma-glutamyl phosphate reductase family.

It is found in the cytoplasm. The enzyme catalyses L-glutamate 5-semialdehyde + phosphate + NADP(+) = L-glutamyl 5-phosphate + NADPH + H(+). It functions in the pathway amino-acid biosynthesis; L-proline biosynthesis; L-glutamate 5-semialdehyde from L-glutamate: step 2/2. In terms of biological role, catalyzes the NADPH-dependent reduction of L-glutamate 5-phosphate into L-glutamate 5-semialdehyde and phosphate. The product spontaneously undergoes cyclization to form 1-pyrroline-5-carboxylate. The sequence is that of Gamma-glutamyl phosphate reductase from Ruthia magnifica subsp. Calyptogena magnifica.